We begin with the raw amino-acid sequence, 549 residues long: T-complex protein 1 subunit theta (549 aa).

The protein belongs to the TCP-1 chaperonin family. In terms of assembly, heterooligomeric complex of about 850 to 900 kDa that forms two stacked rings, 12 to 16 nm in diameter. Interacts with CCT3, KNAT1, STM and TTG1. As to expression, expressed in shoot meristems, root tip, vasculature and leaf epidermis.

Its subcellular location is the cytoplasm. Its function is as follows. Molecular chaperone; assists the folding of proteins upon ATP hydrolysis. Known to play a role, in vitro, in the folding of actin and tubulin. Contributes to stem cell maintenance through its impact on transcription factors trafficking through plasmodesmata. Probably involved in refolding translocated, partially unfolded proteins, including viral movement proteins. In Arabidopsis thaliana (Mouse-ear cress), this protein is T-complex protein 1 subunit theta.